Reading from the N-terminus, the 665-residue chain is METPSQRRPTRSGAQASSTPLSPTRITRLQEKEDLQELNDRLAVYIDRVRSLETENAGLRLRITESEEVVSREVSGIKAAYEAELGDARKTLDSVAKERARLQLELSKVREEFKELKARNTKKEGDLLAAQARLKDLEALLNSKEAALSTALSEKRTLEGELHDLRGQVAKLEAALGEAKKQLQDEMLRRVDAENRLQTLKEELDFQKNIYSEELRETKRRHETRLVEIDNGKQREFESRLADALQELRAQHEDQVEQYKKELEKTYSAKLDNARQSAERNSNLVGAAHEELQQSRIRIDSLSAQLSQLQKQLAAKEAKLRDLEDSLARERDTSRRLLAEKEREMAEMRARMQQQLDEYQELLDIKLALDMEIHAYRKLLEGEEERLRLSPSPTSQRSRGRASSHSSQSQGGGSVTKKRKLESSESRSSFSQHARTSGRVAVEEVDEEGKFVRLRNKSNEDQSMGNWQIKRQNGDDPLMTYRFPPKFTLKAGQVVTIWASGAGATHSPPTDLVWKAQNTWGCGTSLRTALINATGEEVAMRKLVRSLTMVEDNDDEEEDGDELLHHHRGSHCSSSGDPAEYNLRSRTVLCGTCGQPADKAASGSGAQVGGSISSGSSASSVTVTRSFRSVGGSGGGSFGDNLVTRSYLLGNSSPRTQSSQNCSIM.

N-acetylmethionine is present on Met-1. Residues Met-1 to Thr-27 are disordered. Positions Met-1–Glu-33 are head. Residues Met-1 to Ala-130 form an interaction with MLIP region. Thr-3 bears the Phosphothreonine mark. Residue Ser-5 is modified to Phosphoserine. The residue at position 10 (Thr-10) is a Phosphothreonine. A phosphoserine mark is found at Ser-12 and Ser-18. At Thr-19 the chain carries Phosphothreonine. Ser-22 is subject to Phosphoserine. An IF rod domain is found at Glu-31–Leu-387. Position 32 is an N6-acetyllysine; alternate (Lys-32). N6-succinyllysine; alternate is present on Lys-32. A Glycyl lysine isopeptide (Lys-Gly) (interchain with G-Cter in SUMO2); alternate cross-link involves residue Lys-32. Positions Asp-34–Val-70 are coil 1A. Phosphoserine is present on residues Ser-51, Ser-66, and Ser-71. The segment at Ser-71–Ala-80 is linker 1. Lys-78 and Lys-97 each carry N6-acetyllysine. The tract at residues Tyr-81–Thr-218 is coil 1B. A Glycyl lysine isopeptide (Lys-Gly) (interchain with G-Cter in SUMO2) cross-link involves residue Lys-97. Ser-107 bears the Phosphoserine mark. 6 positions are modified to N6-acetyllysine: Lys-108, Lys-114, Lys-123, Lys-135, Lys-144, and Lys-155. Position 171 is an N6-acetyllysine; alternate (Lys-171). At Lys-171 the chain carries N6-succinyllysine; alternate. Lys-171 is covalently cross-linked (Glycyl lysine isopeptide (Lys-Gly) (interchain with G-Cter in SUMO2); alternate). Residues Lys-180, Lys-201, and Lys-208 each carry the N6-acetyllysine modification. Residue Lys-201 forms a Glycyl lysine isopeptide (Lys-Gly) (interchain with G-Cter in SUMO2); alternate linkage. Residue Lys-201 forms a Glycyl lysine isopeptide (Lys-Gly) (interchain with G-Cter in SUMO); alternate linkage. Lys-208 is covalently cross-linked (Glycyl lysine isopeptide (Lys-Gly) (interchain with G-Cter in SUMO2)). Position 212 is a phosphoserine (Ser-212). Glycyl lysine isopeptide (Lys-Gly) (interchain with G-Cter in SUMO2) cross-links involve residues Lys-219 and Lys-233. The segment at Lys-219–Ala-242 is linker 2. N6-acetyllysine is present on residues Lys-233, Lys-260, Lys-265, and Lys-270. The segment at Asp-243–Glu-383 is coil 2. A Glycyl lysine isopeptide (Lys-Gly) (interchain with G-Cter in SUMO2); alternate cross-link involves residue Lys-260. Residue Lys-270 forms a Glycyl lysine isopeptide (Lys-Gly) (interchain with G-Cter in SUMO2); alternate linkage. Phosphoserine is present on residues Ser-277, Ser-282, Ser-301, and Ser-307. Lys-311 is covalently cross-linked (Glycyl lysine isopeptide (Lys-Gly) (interchain with G-Cter in SUMO2); alternate). Residues Lys-311, Lys-316, and Lys-341 each carry the N6-acetyllysine modification. Residues Lys-366 and Lys-378 each participate in a glycyl lysine isopeptide (Lys-Gly) (interchain with G-Cter in SUMO2) cross-link. The disordered stretch occupies residues Glu-384–Val-442. Positions Glu-384–Met-665 are tail. 10 positions are modified to phosphoserine: Ser-390, Ser-392, Ser-395, Ser-398, Ser-403, Ser-404, Ser-406, Ser-407, Ser-409, and Ser-414. A compositionally biased stretch (low complexity) spans Ser-395–Ser-409. Phosphothreonine is present on Thr-416. Position 417 is an N6-acetyllysine (Lys-417). Glycyl lysine isopeptide (Lys-Gly) (interchain with G-Cter in SUMO2) cross-links involve residues Lys-417 and Lys-420. The short motif at Lys-417 to Glu-422 is the Nuclear localization signal element. Phosphoserine occurs at positions 423, 426, 429, and 431. One can recognise an LTD domain in the interval Ser-428 to Arg-545. A Glycyl lysine isopeptide (Lys-Gly) (interchain with G-Cter in SUMO2); alternate cross-link involves residue Lys-450. Lys-450 and Lys-457 each carry N6-acetyllysine. Phosphoserine is present on residues Ser-458 and Ser-463. Glycyl lysine isopeptide (Lys-Gly) (interchain with G-Cter in SUMO2) cross-links involve residues Lys-470 and Lys-486. At Lys-486 the chain carries N6-acetyllysine. Phosphothreonine is present on Thr-496. The residue at position 500 (Ser-500) is a Phosphoserine. Phosphothreonine is present on residues Thr-505 and Thr-510. Ser-546 bears the Phosphoserine mark. Thr-548 bears the Phosphothreonine mark. The segment covering Asp-552–Asp-561 has biased composition (acidic residues). The disordered stretch occupies residues Asp-552 to Asp-577. Phosphoserine occurs at positions 570 and 573. Lys-599 participates in a covalent cross-link: Glycyl lysine isopeptide (Lys-Gly) (interchain with G-Cter in SUMO2); alternate. Lys-599 participates in a covalent cross-link: Glycyl lysine isopeptide (Lys-Gly) (interchain with G-Cter in SUMO1); alternate. Phosphoserine is present on residues Ser-613, Ser-614, Ser-617, and Ser-620. Ser-626 and Ser-629 each carry an O-linked (GlcNAc) serine glycan. Phosphoserine occurs at positions 629, 633, 637, and 653. Residues Leu-648–Cys-662 constitute a propeptide, removed in Lamin-A/C form. Position 662 is a cysteine methyl ester (Cys-662). The S-farnesyl cysteine moiety is linked to residue Cys-662. A propeptide spans Ser-663 to Met-665 (removed in Prelamin-A/C form and in Lamin-A/C form).

It belongs to the intermediate filament family. Homodimer of lamin A and lamin C. Lamin dimers then assemble into dimeric head-to-tail polymers. Ultimately, two head-to-tail polymers assemble laterally into a protofilament with a uniformly shaped rod of 3.5 nm in diameter. Interacts with lamin-associated polypeptides IA, IB and TMPO-alpha, RB1 and with emerin. Interacts with SREBF1, SREBF2, SUN2 and TMEM43. Interacts with TMEM201. Proteolytically processed isoform A interacts with NARF. Interacts with SUN1. Interacts with MLIP. Interacts with DMPK; may regulate nuclear envelope stability. Interacts with SUV39H1; the interaction increases stability of SUV39H1. Interacts with SYNE2. Interacts with ITSN1 isoform 2. Interacts with IFFO1; enables the formation of an interior nucleoskeleton that is recruited to DNA double-strand breaks. As to quaternary structure, interacts with EMD. In terms of assembly, interacts (via C-terminus) with LEMD2 (via N-terminus) (in vitro). In terms of processing, proteolytic cleavage of the C-terminal of 18 residues of prelamin-A/C results in the production of lamin-A/C. The prelamin-A/C maturation pathway includes farnesylation of CAAX motif by protein farnesyltransferase (FNTA and FNTB), removal of the last three amino acids (-AAX) by RCE1/FACE2 and/or ZMPSTE24, methylation of the C-terminal cysteine by ICMT and endoproteolytic removal of the last 15 C-terminal amino acids by ZMPSTE24. Proteolytic cleavage requires prior farnesylation and methylation, and absence of these blocks cleavage. Farnesylation of prelamin-A/C facilitates nuclear envelope targeting. Post-translationally, phosphorylation plays a key role in lamin organization, subcellular localization and nuclear envelope disintegration. Phosphorylation by CDK1 at Ser-22 and Ser-392 at the onset of mitosis drives lamin disassembly and nuclear envelope breakdown. Phosphorylation at Ser-22 and Ser-392 during interphase promotes localization to the nucleoplasm and regulates lamina assembly. Phosphorylation at Ser-22, Ser-392 and Ser-629 during interphase causes redistribution between the nucleus and the cytoplasm. Phosphorylation at Ser-22 by CDK1 regulates matrix stiffness. Phosphorylation status of Ser-22 determines its localization between double-strand break (DSB) sites and the nuclear matrix. Phosphorylated by ATR at Ser-282 in response to DNA damage, leading to lamin disassembly and nuclear envelope rupture. Phosphorylation also regulates stability in micronuclei arising from genome instability: phosphorylation at Ser-395 by ATR in response to genome instability and double-stranded DNA breaks primes LMNA for subsequent phosphorylation at Ser-392 by CDK1 and micronuclei envelope rupture. The rupture of micronuclear envelope triggers the cGAS-STING pathway thereby activating the type I interferon response and innate immunity. In terms of processing, acetylation by KAT8 is required for nuclear architecture. Sumoylation is necessary for the localization to the nuclear envelope.

The protein localises to the nucleus lamina. Its subcellular location is the nucleus envelope. The protein resides in the nucleus. It localises to the nucleoplasm. It is found in the nucleus matrix. Lamins are intermediate filament proteins that assemble into a filamentous meshwork, and which constitute the major components of the nuclear lamina, a fibrous layer on the nucleoplasmic side of the inner nuclear membrane. Lamins provide a framework for the nuclear envelope, bridging the nuclear envelope and chromatin, thereby playing an important role in nuclear assembly, chromatin organization, nuclear membrane and telomere dynamics. Lamin A and C also regulate matrix stiffness by conferring nuclear mechanical properties. The structural integrity of the lamina is strictly controlled by the cell cycle, as seen by the disintegration and formation of the nuclear envelope in prophase and telophase, respectively. Lamin A and C are present in equal amounts in the lamina of mammals. Also invoved in DNA repair: recruited by DNA repair proteins XRCC4 and IFFO1 to the DNA double-strand breaks (DSBs) to prevent chromosome translocation by immobilizing broken DNA ends. Required for normal development of peripheral nervous system and skeletal muscle and for muscle satellite cell proliferation. Required for osteoblastogenesis and bone formation. Also prevents fat infiltration of muscle and bone marrow, helping to maintain the volume and strength of skeletal muscle and bone. Required for cardiac homeostasis. Functionally, prelamin-A/C can accelerate smooth muscle cell senescence. It acts to disrupt mitosis and induce DNA damage in vascular smooth muscle cells (VSMCs), leading to mitotic failure, genomic instability, and premature senescence. This is Prelamin-A/C (Lmna) from Rattus norvegicus (Rat).